The chain runs to 332 residues: Cysteine and histidine-rich domain-containing protein 1 (332 aa).

Ala2 carries the post-translational modification N-acetylalanine. The interval 2–77 is interaction with PPP5C; sequence ALLCYNRGCG…KPPEPVKPEV (76 aa). Zn(2+) is bound by residues Cys5, Cys10, Cys24, His27, Cys42, and Cys43. CHORD domains follow at residues 5–64 and 157–216; these read CYNR…KGRH and CKNG…TGKH. A Phosphothreonine modification is found at Thr47. The residue at position 51 (Ser51) is a Phosphoserine. Cys59, His64, Cys157, Cys162, Cys176, His179, Cys194, Cys195, Cys211, and His216 together coordinate Zn(2+). The tract at residues 62–82 is disordered; sequence GRHNSEKPPEPVKPEVKTTEK. A compositionally biased stretch (basic and acidic residues) spans 64 to 82; that stretch reads HNSEKPPEPVKPEVKTTEK. An interaction with HSP90AA1 and HSP90AB1 region spans residues 65–316; that stretch reads NSEKPPEPVK…AEPMQWASLE (252 aa). The CS domain maps to 227–316; sequence VVPCRHDWHQ…AEPMQWASLE (90 aa).

As to quaternary structure, interacts with HSP90AA1, HSP90AB1, PPP5C, ROCK1 and ROCK2.

Its function is as follows. Regulates centrosome duplication, probably by inhibiting the kinase activity of ROCK2. Proposed to act as co-chaperone for HSP90. May play a role in the regulation of NOD1 via a HSP90 chaperone complex. In vitro, has intrinsic chaperone activity. This function may be achieved by inhibiting association of ROCK2 with NPM1. Plays a role in ensuring the localization of the tyrosine kinase receptor EGFR to the plasma membrane, and thus ensures the subsequent regulation of EGFR activity and EGF-induced actin cytoskeleton remodeling. Involved in stress response. Prevents tumorigenesis. This is Cysteine and histidine-rich domain-containing protein 1 (CHORDC1) from Bos taurus (Bovine).